Consider the following 49-residue polypeptide: Protein YlcJ (49 aa).

An N-terminal signal peptide occupies residues 1-21 (MSLVLCFLLMSLFFMYSFVLS).

The protein is Protein YlcJ of Escherichia coli (strain K12).